Reading from the N-terminus, the 373-residue chain is D-amino-acid oxidase 3 (373 aa).

Positions 1-19 (MVKYDAVILGSGVLGLSIA) are cleaved as a signal peptide. Residues Ser-11, Leu-14, Asp-35, Ala-46, Ser-47, Gly-51, and Asn-53 each coordinate FAD. Residue Phe-57 coordinates anthranilate. Residue Asn-180 is glycosylated (N-linked (GlcNAc...) asparagine). Residues Cys-214 and Cys-271 are joined by a disulfide bond. 3 residues coordinate anthranilate: Tyr-229, Tyr-246, and Arg-296. Positions 229, 246, and 296 each coordinate (R)-lactate. 5 residues coordinate FAD: Arg-296, Gly-342, Gly-345, Tyr-346, and Gln-347. The Microbody targeting signal signature appears at 371–373 (AKL).

This sequence belongs to the DAMOX/DASOX family. Requires FAD as cofactor.

It localises to the peroxisome matrix. The enzyme catalyses a D-alpha-amino acid + O2 + H2O = a 2-oxocarboxylate + H2O2 + NH4(+). Catalyzes the oxidative deamination of D-amino acids with broad substrate specificity. Enables the organism to utilize D-amino acids as a source of nutrients. Enables the organism to utilize D-glutamate and D-methionine as a nitrogen source. Protects the organism from the toxicity of D-amino acids, including from D-glutamate. May play a role in its interaction with the host. The protein is D-amino-acid oxidase 3 of Cryptococcus neoformans var. grubii serotype A (strain H99 / ATCC 208821 / CBS 10515 / FGSC 9487) (Filobasidiella neoformans var. grubii).